Reading from the N-terminus, the 506-residue chain is Galactose/methyl galactoside import ATP-binding protein MglA (506 aa).

ABC transporter domains are found at residues 14-249 (LEMS…VGRS) and 264-506 (VILE…SLHL). 46-53 (GENGAGKS) is a binding site for ATP.

The protein belongs to the ABC transporter superfamily. Galactose/methyl galactoside importer (TC 3.A.1.2.3) family. The complex is composed of one ATP-binding protein (MglA), two transmembrane proteins (MglC) and a solute-binding protein (MglB).

Its subcellular location is the cell inner membrane. It catalyses the reaction D-galactose(out) + ATP + H2O = D-galactose(in) + ADP + phosphate + H(+). The catalysed reaction is methyl beta-D-galactoside(out) + ATP + H2O = methyl beta-D-galactoside(in) + ADP + phosphate + H(+). Its function is as follows. Part of the ABC transporter complex MglABC involved in galactose/methyl galactoside import. Responsible for energy coupling to the transport system. The protein is Galactose/methyl galactoside import ATP-binding protein MglA of Yersinia pestis bv. Antiqua (strain Antiqua).